The sequence spans 262 residues: tRNA pseudouridine synthase A (262 aa).

Catalysis depends on Asp-51, which acts as the Nucleophile. A substrate-binding site is contributed by Tyr-109.

The protein belongs to the tRNA pseudouridine synthase TruA family. As to quaternary structure, homodimer.

The enzyme catalyses uridine(38/39/40) in tRNA = pseudouridine(38/39/40) in tRNA. Its function is as follows. Formation of pseudouridine at positions 38, 39 and 40 in the anticodon stem and loop of transfer RNAs. This Glaesserella parasuis serovar 5 (strain SH0165) (Haemophilus parasuis) protein is tRNA pseudouridine synthase A.